The chain runs to 627 residues: Protein CER1-like 1 (627 aa).

Transmembrane regions (helical) follow at residues 19 to 39, 48 to 68, 126 to 146, 186 to 206, and 328 to 348; these read FKYL…VTAV, LMIV…ISVS, GAIL…YWFH, LLFA…IVSI, and YLTC…TSAI. Residues 138–272 form the Fatty acid hydroxylase domain; it reads VEFLYYWFHR…MPIYDFIYGT (135 aa).

Belongs to the sterol desaturase family. Expressed in flowers and siliques. Not detected in pollen, pedicels and seeds.

The protein localises to the membrane. The polypeptide is Protein CER1-like 1 (Arabidopsis thaliana (Mouse-ear cress)).